Consider the following 438-residue polypeptide: GTPase Obg (438 aa).

The Obg domain maps to 2 to 160 (SMFLDTAKIS…RELELELKIL (159 aa)). The interval 128-147 (NIRFATPRNPAPEIAENGEP) is disordered. The region spanning 161-338 (ADVGLVGFPS…LLDATANLLA (178 aa)) is the OBG-type G domain. GTP contacts are provided by residues 167–174 (GFPSVGKS), 192–196 (FTTIV), 214–217 (DLPG), 284–287 (NKMD), and 319–321 (STL). Mg(2+)-binding residues include Ser174 and Thr194. The region spanning 360 to 438 (GFSEEEKAFE…IGNFEFEFVD (79 aa)) is the OCT domain.

The protein belongs to the TRAFAC class OBG-HflX-like GTPase superfamily. OBG GTPase family. As to quaternary structure, monomer. The cofactor is Mg(2+).

The protein localises to the cytoplasm. In terms of biological role, an essential GTPase which binds GTP, GDP and possibly (p)ppGpp with moderate affinity, with high nucleotide exchange rates and a fairly low GTP hydrolysis rate. Plays a role in control of the cell cycle, stress response, ribosome biogenesis and in those bacteria that undergo differentiation, in morphogenesis control. This chain is GTPase Obg, found in Streptococcus uberis (strain ATCC BAA-854 / 0140J).